The primary structure comprises 208 residues: ATP-dependent Clp protease proteolytic subunit (208 aa).

Ser98 functions as the Nucleophile in the catalytic mechanism. His123 is an active-site residue.

Belongs to the peptidase S14 family. As to quaternary structure, fourteen ClpP subunits assemble into 2 heptameric rings which stack back to back to give a disk-like structure with a central cavity, resembling the structure of eukaryotic proteasomes.

The protein localises to the cytoplasm. The catalysed reaction is Hydrolysis of proteins to small peptides in the presence of ATP and magnesium. alpha-casein is the usual test substrate. In the absence of ATP, only oligopeptides shorter than five residues are hydrolyzed (such as succinyl-Leu-Tyr-|-NHMec, and Leu-Tyr-Leu-|-Tyr-Trp, in which cleavage of the -Tyr-|-Leu- and -Tyr-|-Trp bonds also occurs).. In terms of biological role, cleaves peptides in various proteins in a process that requires ATP hydrolysis. Has a chymotrypsin-like activity. Plays a major role in the degradation of misfolded proteins. The sequence is that of ATP-dependent Clp protease proteolytic subunit from Wolbachia sp. subsp. Brugia malayi (strain TRS).